The primary structure comprises 1038 residues: Fibronectin-binding protein A (1038 aa).

The signal sequence occupies residues Met-1–Ala-36. The YSIRK-G/S signaling motif signature appears at Tyr-7–Ser-18. The segment at Ala-37–Thr-193 is disordered. Positions Ala-37 to Asn-507 are ligand-binding A region. Residues Glu-39–Thr-92 show a composition bias toward polar residues. Over residues Thr-112 to Val-121 the composition is skewed to basic and acidic residues. Residues Lys-122–Glu-164 show a composition bias toward polar residues. Residues Asp-174–Gly-189 show a composition bias toward basic and acidic residues. The tract at residues Gly-189–Asn-507 is fibrinogen/elastin/tropoelastin-binding. The tract at residues Gly-508 to Thr-868 is fibronectin-binding. One copy of the B-1 repeat lies at Glu-541–Ile-570. The interval Glu-541–Ser-600 is 2 X approximate tandem repeats. The stretch at Glu-571–Ser-600 is one B-2 repeat. Disordered stretches follow at residues Leu-736–Ile-804, Ile-825–Val-976, and Val-989–Met-1015. The stretch at Gly-741–His-778 is one D-1 repeat. Residues Gly-741–Thr-898 are 4 X approximate tandem repeats. The D-2 repeat unit spans residues Gly-779–His-816. Residues Gly-817–Ser-855 form a D-3 repeat. The segment covering Ile-825–Pro-834 has biased composition (basic and acidic residues). The D-4 repeat unit spans residues Gly-856–Thr-898. The segment covering Pro-870–Pro-958 has biased composition (pro residues). WR repeat units follow at residues Pro-899 to Thr-912, Pro-913 to Thr-926, Pro-927 to Thr-940, Pro-941 to Lys-954, and Pro-955 to Lys-968. Residues Pro-899–Lys-968 form a 5 X tandem repeats, Pro-rich (WR) region. Positions Leu-1002–Gly-1006 match the LPXTG sorting signal motif. Thr-1005 is subject to Pentaglycyl murein peptidoglycan amidated threonine. The propeptide at Gly-1006–Ala-1038 is removed by sortase.

Its subcellular location is the secreted. It localises to the cell wall. Promotes bacterial attachment to multiple substrates, such as fibronectin (Fn), fibrinogen (Fg), elastin peptides and tropoelastin. This confers to S.aureus the ability to invade endothelial cells. Promotes adherence to and aggregation of activated platelets. The sequence is that of Fibronectin-binding protein A (fnbA) from Staphylococcus aureus (strain Mu50 / ATCC 700699).